The primary structure comprises 474 residues: UDP-N-acetylmuramate--L-alanine ligase (474 aa).

ATP is bound at residue 115 to 121 (GTHGKTT).

The protein belongs to the MurCDEF family.

Its subcellular location is the cytoplasm. It carries out the reaction UDP-N-acetyl-alpha-D-muramate + L-alanine + ATP = UDP-N-acetyl-alpha-D-muramoyl-L-alanine + ADP + phosphate + H(+). It functions in the pathway cell wall biogenesis; peptidoglycan biosynthesis. Cell wall formation. The chain is UDP-N-acetylmuramate--L-alanine ligase from Novosphingobium aromaticivorans (strain ATCC 700278 / DSM 12444 / CCUG 56034 / CIP 105152 / NBRC 16084 / F199).